A 182-amino-acid chain; its full sequence is Endoribonuclease YbeY (182 aa).

Residues His-115, His-119, and His-125 each coordinate Zn(2+).

Belongs to the endoribonuclease YbeY family. Requires Zn(2+) as cofactor.

The protein resides in the cytoplasm. Its function is as follows. Single strand-specific metallo-endoribonuclease involved in late-stage 70S ribosome quality control and in maturation of the 3' terminus of the 16S rRNA. The sequence is that of Endoribonuclease YbeY from Bifidobacterium longum (strain NCC 2705).